Reading from the N-terminus, the 106-residue chain is Ferredoxin (106 aa).

[3Fe-4S] cluster contacts are provided by cysteine 9 and cysteine 17. [4Fe-4S] cluster is bound by residues cysteine 21, cysteine 40, cysteine 43, and cysteine 46. The region spanning 31–60 (RMLYIHPDECVDCGACEPVCPVEAIYYEDD) is the 4Fe-4S ferredoxin-type domain. Cysteine 50 lines the [3Fe-4S] cluster pocket. The interval 84-106 (GAAKVGKVDRDVEPVSSLPPQGE) is disordered.

It depends on [4Fe-4S] cluster as a cofactor. [3Fe-4S] cluster is required as a cofactor.

In terms of biological role, ferredoxins are iron-sulfur proteins that transfer electrons in a wide variety of metabolic reactions. In Saccharopolyspora erythraea (Streptomyces erythraeus), this protein is Ferredoxin (fdxA).